Reading from the N-terminus, the 200-residue chain is MKVLITGFEPFGGEEINPSWEAVRRLPDEIAGAELIKRQLPVTFRGVRELLPRLIVETKPDLVILTGQAGGRPNITVERVAINVMDSTMPDNEGYTPEDEPIFEGAPDAYFATLPIKAIVKALREAKIPAAVSNTAGTYVCNTAMYTVLHTIAVAGMETKAGFIHVPFIHEQALDKPRPSMALETVVKAYEVIIKTSLKA.

Catalysis depends on residues Glu78, Cys141, and His165.

This sequence belongs to the peptidase C15 family. Homotetramer.

It is found in the cytoplasm. It catalyses the reaction Release of an N-terminal pyroglutamyl group from a polypeptide, the second amino acid generally not being Pro.. Removes 5-oxoproline from various penultimate amino acid residues except L-proline. The chain is Pyrrolidone-carboxylate peptidase from Thermococcus onnurineus (strain NA1).